The sequence spans 374 residues: Chaperone protein DnaJ (374 aa).

Residues 5–70 (DFYEILGVGK…QKRDAYDRYG (66 aa)) form the J domain. Residues 29 to 50 (AMKHHPDRNPDSKGAEDKFKEA) are disordered. A compositionally biased stretch (basic and acidic residues) spans 35 to 50 (DRNPDSKGAEDKFKEA). Residues 134–212 (GYDTTIRVPS…CSGAGKIKRN (79 aa)) form a CR-type zinc finger. Zn(2+) contacts are provided by Cys-147, Cys-150, Cys-164, Cys-167, Cys-186, Cys-189, Cys-200, and Cys-203. CXXCXGXG motif repeat units lie at residues 147 to 154 (CETCDGSG), 164 to 171 (CTTCGGHG), 186 to 193 (CPKCHGSG), and 200 to 207 (CGTCSGAG).

The protein belongs to the DnaJ family. Homodimer. It depends on Zn(2+) as a cofactor.

It localises to the cytoplasm. In terms of biological role, participates actively in the response to hyperosmotic and heat shock by preventing the aggregation of stress-denatured proteins and by disaggregating proteins, also in an autonomous, DnaK-independent fashion. Unfolded proteins bind initially to DnaJ; upon interaction with the DnaJ-bound protein, DnaK hydrolyzes its bound ATP, resulting in the formation of a stable complex. GrpE releases ADP from DnaK; ATP binding to DnaK triggers the release of the substrate protein, thus completing the reaction cycle. Several rounds of ATP-dependent interactions between DnaJ, DnaK and GrpE are required for fully efficient folding. Also involved, together with DnaK and GrpE, in the DNA replication of plasmids through activation of initiation proteins. The sequence is that of Chaperone protein DnaJ from Janthinobacterium sp. (strain Marseille) (Minibacterium massiliensis).